The sequence spans 2531 residues: Neurogenic locus notch homolog protein 1 (2531 aa).

A signal peptide spans 1 to 18; it reads MPRLLTPLLCLTLLPALA. At 19–1725 the chain is on the extracellular side; it reads ARGLRCSQPS…VEPPLPSQLH (1707 aa). 4 EGF-like domains span residues 20 to 58, 59 to 99, 102 to 139, and 140 to 176; these read RGLRCSQPSGTCLNGGRCEVANGTEACVCSGAFVGQRCQ, DSNP…PLCL, LDNACLANPCRNGGTCDLLTLTEYKCRCPPGWSGKSCQ, and QADPCASNPCANGGQCLPFESSYICRCPPGFHGPTCR. 32 disulfides stabilise this stretch: cysteine 24-cysteine 37, cysteine 31-cysteine 46, cysteine 63-cysteine 74, cysteine 68-cysteine 87, cysteine 89-cysteine 98, cysteine 106-cysteine 117, cysteine 111-cysteine 127, cysteine 129-cysteine 138, cysteine 144-cysteine 155, cysteine 149-cysteine 164, cysteine 166-cysteine 175, cysteine 182-cysteine 195, cysteine 189-cysteine 204, cysteine 206-cysteine 215, cysteine 222-cysteine 233, cysteine 227-cysteine 243, cysteine 245-cysteine 254, cysteine 261-cysteine 272, cysteine 266-cysteine 281, cysteine 283-cysteine 292, cysteine 299-cysteine 312, cysteine 306-cysteine 321, cysteine 323-cysteine 332, cysteine 339-cysteine 350, cysteine 344-cysteine 359, cysteine 361-cysteine 370, cysteine 376-cysteine 387, cysteine 381-cysteine 398, cysteine 400-cysteine 409, cysteine 416-cysteine 429, cysteine 423-cysteine 438, and cysteine 440-cysteine 449. An O-linked (Glc...) serine glycan is attached at serine 65. A glycan (O-linked (Fuc...) threonine) is linked at threonine 73. Threonine 116 carries O-linked (Fuc...) threonine glycosylation. O-linked (Glc...) serine glycosylation is present at serine 146. The EGF-like 5; calcium-binding domain maps to 178-216; sequence DVNECSQNPGLCRHGGTCHNEIGSYRCACRATHTGPHCE. Threonine 194 is a glycosylation site (O-linked (Fuc...) threonine). An EGF-like 6 domain is found at 218–255; it reads PYVPCSPSPCQNGGTCRPTGDTTHECACLPGFAGQNCE. Threonine 232 carries an O-linked (Fuc...) threonine; alternate glycan. Threonine 232 carries O-linked (GalNAc...) threonine; alternate glycosylation. Positions 257–293 constitute an EGF-like 7; calcium-binding domain; it reads NVDDCPGNNCKNGGACVDGVNTYNCRCPPEWTGQYCT. Residues 295–333 form the EGF-like 8; calcium-binding domain; it reads DVDECQLMPNACQNGGTCHNTHGGYNCVCVNGWTGEDCS. A glycan (O-linked (Fuc...) threonine) is linked at threonine 311. The EGF-like 9; calcium-binding domain occupies 335–371; that stretch reads NIDDCASAACFQGATCHDRVASFYCECPHGRTGLLCH. Serine 341 is a glycosylation site (O-linked (Glc...) serine). Threonine 349 carries O-linked (Fuc...) threonine glycosylation. Residues 372-410 form the EGF-like 10; calcium-binding domain; sequence LNDACISNPCNEGSNCDTNPVNGKAICTCPSGYTGPACS. Serine 378 is a glycosylation site (O-linked (Glc...) serine). The EGF-like 11; calcium-binding domain maps to 412–450; the sequence is DVDECALGANPCEHAGKCLNTLGSFECQCLQGYTGPRCE. The interval 420–421 is interaction with DLL4; the sequence is AN. Residues threonine 432 and serine 435 each coordinate Ca(2+). O-linked (Glc...) serine glycosylation is present at serine 435. The interval 448-452 is interaction with DLL4; it reads RCEID. The Ca(2+) site is built by aspartate 452, valine 453, and glutamate 455. The region spanning 452–488 is the EGF-like 12; calcium-binding domain; that stretch reads DVNECISNPCQNDATCLDQIGEFQCICMPGYEGVYCE. Cystine bridges form between cysteine 456–cysteine 467, cysteine 461–cysteine 476, and cysteine 478–cysteine 487. Residue serine 458 is glycosylated (O-linked (Glc...) serine). Residue threonine 466 is glycosylated (O-linked (Fuc...) threonine). Aspartate 469 and glutamine 470 together coordinate Ca(2+). Ca(2+) contacts are provided by asparagine 490, threonine 491, and glutamate 493. In terms of domain architecture, EGF-like 13; calcium-binding spans 490–526; it reads NTDECASSPCLHNGHCMDKINEFQCQCPKGFNGHLCQ. 75 disulfide bridges follow: cysteine 494–cysteine 505, cysteine 499–cysteine 514, cysteine 516–cysteine 525, cysteine 532–cysteine 543, cysteine 537–cysteine 552, cysteine 554–cysteine 563, cysteine 570–cysteine 580, cysteine 575–cysteine 589, cysteine 591–cysteine 600, cysteine 607–cysteine 618, cysteine 612–cysteine 627, cysteine 629–cysteine 638, cysteine 645–cysteine 655, cysteine 650–cysteine 664, cysteine 666–cysteine 675, cysteine 682–cysteine 693, cysteine 687–cysteine 702, cysteine 704–cysteine 713, cysteine 720–cysteine 730, cysteine 725–cysteine 739, cysteine 741–cysteine 750, cysteine 757–cysteine 768, cysteine 762–cysteine 777, cysteine 779–cysteine 788, cysteine 795–cysteine 806, cysteine 800–cysteine 815, cysteine 817–cysteine 826, cysteine 833–cysteine 844, cysteine 838–cysteine 855, cysteine 857–cysteine 866, cysteine 873–cysteine 884, cysteine 878–cysteine 893, cysteine 895–cysteine 904, cysteine 911–cysteine 922, cysteine 916–cysteine 931, cysteine 933–cysteine 942, cysteine 949–cysteine 960, cysteine 954–cysteine 969, cysteine 971–cysteine 980, cysteine 987–cysteine 998, cysteine 992–cysteine 1007, cysteine 1009–cysteine 1018, cysteine 1025–cysteine 1036, cysteine 1030–cysteine 1045, cysteine 1047–cysteine 1056, cysteine 1063–cysteine 1074, cysteine 1068–cysteine 1083, cysteine 1085–cysteine 1094, cysteine 1101–cysteine 1122, cysteine 1116–cysteine 1131, cysteine 1133–cysteine 1142, cysteine 1149–cysteine 1160, cysteine 1154–cysteine 1169, cysteine 1171–cysteine 1180, cysteine 1187–cysteine 1198, cysteine 1192–cysteine 1207, cysteine 1209–cysteine 1218, cysteine 1225–cysteine 1244, cysteine 1238–cysteine 1253, cysteine 1255–cysteine 1264, cysteine 1271–cysteine 1284, cysteine 1276–cysteine 1293, cysteine 1295–cysteine 1304, cysteine 1311–cysteine 1322, cysteine 1316–cysteine 1334, cysteine 1336–cysteine 1345, cysteine 1352–cysteine 1363, cysteine 1357–cysteine 1372, cysteine 1374–cysteine 1383, cysteine 1391–cysteine 1403, cysteine 1397–cysteine 1414, cysteine 1416–cysteine 1425, cysteine 1449–cysteine 1472, cysteine 1454–cysteine 1467, and cysteine 1463–cysteine 1479. The O-linked (Glc...) serine glycan is linked to serine 496. Ca(2+)-binding residues include aspartate 507 and lysine 508. The region spanning 528 to 564 is the EGF-like 14; calcium-binding domain; the sequence is DVDECASTPCKNGAKCLDGPNTYTCVCTEGYTGTHCE. Serine 534 is a glycosylation site (O-linked (Glc...) serine). The region spanning 566–601 is the EGF-like 15; calcium-binding domain; that stretch reads DIDECDPDPCHYGSCKDGVATFTCLCQPGYTGHHCE. An EGF-like 16; calcium-binding domain is found at 603–639; it reads NINECHSQPCRHGGTCQDRDNSYLCLCLKGTTGPNCE. Serine 609 is a glycosylation site (O-linked (Glc...) serine). Residue threonine 617 is glycosylated (O-linked (Fuc...) threonine). The 36-residue stretch at 641–676 folds into the EGF-like 17; calcium-binding domain; the sequence is NLDDCASNPCDSGTCLDKIDGYECACEPGYTGSMCN. Serine 647 is a glycosylation site (O-linked (Glc...) serine). The region spanning 678–714 is the EGF-like 18; calcium-binding domain; that stretch reads NIDECAGSPCHNGGTCEDGIAGFTCRCPEGYHDPTCL. O-linked (Fuc...) threonine glycosylation occurs at threonine 692. Residues 716 to 751 enclose the EGF-like 19; calcium-binding domain; sequence EVNECNSNPCIHGACRDGLNGYKCDCAPGWSGTNCD. O-linked (Glc...) serine glycosylation occurs at serine 722. The 37-residue stretch at 753–789 folds into the EGF-like 20; calcium-binding domain; that stretch reads NNNECESNPCVNGGTCKDMTSGYVCTCREGFSGPNCQ. The O-linked (Glc...) serine glycan is linked to serine 759. Threonine 767 is a glycosylation site (O-linked (Fuc...) threonine). Serine 784 carries O-linked (GlcNAc) serine glycosylation. The region spanning 791–827 is the EGF-like 21; calcium-binding domain; sequence NINECASNPCLNQGTCIDDVAGYKCNCPLPYTGATCE. The O-linked (Glc...) serine glycan is linked to serine 797. O-linked (Fuc...) threonine glycosylation is present at threonine 805. The EGF-like 22 domain occupies 829–867; the sequence is VLAPCATSPCKNSGVCKESEDYESFSCVCPTGWQGQTCE. Residues 869 to 905 form the EGF-like 23; calcium-binding domain; sequence DINECVKSPCRHGASCQNTNGSYRCLCQAGYTGRNCE. N-linked (GlcNAc...) asparagine glycosylation is present at asparagine 888. Threonine 900 is a glycosylation site (O-linked (GlcNAc) threonine). The 37-residue stretch at 907–943 folds into the EGF-like 24 domain; that stretch reads DIDDCRPNPCHNGGSCTDGINTAFCDCLPGFQGAFCE. Serine 921 carries O-linked (Fuc) serine glycosylation. The EGF-like 25; calcium-binding domain maps to 945-981; it reads DINECASNPCQNGANCTDCVDSYTCTCPVGFNGIHCE. A glycan (O-linked (Glc...) serine) is linked at serine 951. Asparagine 959 carries N-linked (GlcNAc...) asparagine glycosylation. Positions 983–1019 constitute an EGF-like 26 domain; sequence NTPDCTESSCFNGGTCVDGINSFTCLCPPGFTGSYCQ. A glycan (O-linked (Fuc...) threonine) is linked at threonine 997. Positions 1021 to 1057 constitute an EGF-like 27; calcium-binding domain; the sequence is DVNECDSRPCLHGGTCQDSYGTYKCTCPQGYTGLNCQ. Serine 1027 is a glycosylation site (O-linked (Glc...) serine). Residue threonine 1035 is glycosylated (O-linked (Fuc...) threonine). EGF-like domains are found at residues 1059 to 1095 and 1097 to 1143; these read LVRWCDSAPCKNGGRCWQTNTQYHCECRSGWTGVNCD and LSVS…SYCE. Serine 1065 carries O-linked (Glc...) serine glycosylation. The region spanning 1145–1181 is the EGF-like 30; calcium-binding domain; that stretch reads EVDECSPNPCQNGATCTDYLGGFSCKCVAGYHGSNCS. Threonine 1159 carries an O-linked (Fuc...) threonine glycan. N-linked (GlcNAc...) asparagine glycosylation occurs at asparagine 1179. Residues 1183–1219 enclose the EGF-like 31; calcium-binding domain; it reads EINECLSQPCQNGGTCIDLTNSYKCSCPRGTQGVHCE. O-linked (Glc...) serine glycosylation is present at serine 1189. Threonine 1197 is a glycosylation site (O-linked (Fuc...) threonine). The region spanning 1221-1265 is the EGF-like 32; calcium-binding domain; the sequence is NVDDCHPPLDPASRSPKCFNNGTCVDQVGGYTCTCPPGFVGERCE. A glycan (N-linked (GlcNAc...) asparagine) is linked at asparagine 1241. 4 EGF-like domains span residues 1267–1305, 1307–1346, 1348–1384, and 1387–1426; these read DVNECLSNPCDPRGTQNCVQRVNDFHCECRAGHTGRRCE, VINGCRGKPCKNGGVCAVASNTARGFICRCPAGFEGATCE, DARTCGSLRCLNGGTCISGPRSPTCLCLGSFTGPECQ, and ASSPCVGSNPCYNQGTCEPTSENPFYRCLCPAKFNGLLCH. Residue serine 1273 is glycosylated (O-linked (Glc...) serine). Threonine 1362 carries an O-linked (Fuc...) threonine glycan. Residue threonine 1379 is glycosylated (O-linked (GlcNAc...) threonine). Residue threonine 1402 is glycosylated (O-linked (Fuc...) threonine; alternate). A glycan (O-linked (GalNAc...) threonine; alternate) is linked at threonine 1402. 3 LNR repeats span residues 1449-1489, 1490-1531, and 1532-1571; these read CELP…PWKN, CTQS…CNPL, and YDQYCKDHFSDGHCDQGCNSAECEWDGLDCAEHVPERLAA. 4 residues coordinate Ca(2+): aspartate 1457, asparagine 1460, aspartate 1475, and aspartate 1478. Residue asparagine 1489 is glycosylated (N-linked (GlcNAc...) asparagine). Intrachain disulfides connect cysteine 1490–cysteine 1514, cysteine 1496–cysteine 1509, cysteine 1505–cysteine 1521, cysteine 1536–cysteine 1549, and cysteine 1545–cysteine 1561. N-linked (GlcNAc...) asparagine glycosylation is present at asparagine 1587. Positions 1718 to 1750 are interaction with PSEN1; that stretch reads PPLPSQLHLMYVAAAAFVLLFFVGCGVLLSRKR. Residues 1726 to 1746 traverse the membrane as a helical segment; the sequence is LMYVAAAAFVLLFFVGCGVLL. At 1747–2531 the chain is on the cytoplasmic side; the sequence is SRKRRRQHGQ…QITHIPEAFK (785 aa). Residue lysine 1749 forms a Glycyl lysine isopeptide (Lys-Gly) (interchain with G-Cter in ubiquitin) linkage. The disordered stretch occupies residues 1770–1798; that stretch reads KKKRREPLGEDSVGLKPLKNASDGALMDD. Threonine 1851 bears the Phosphothreonine mark. ANK repeat units follow at residues 1917-1946, 1950-1980, 1984-2013, 2017-2046, and 2050-2079; these read TGETALHLAARYSRSDAAKRLLEASADANI, MGRTPLHAAVSADAQGVFQILLRNRATDLDA, DGTTPLILAARLAVEGMLEDLINSHADVNA, LGKSALHWAAAVNNVDAAVVLLKNGANKDM, and KEETPLFLAAREGSYETAKVLLDHFANRDI. The interval 1937-1945 is HIF1AN-binding; sequence LLEASADAN. (3S)-3-hydroxyasparagine; by HIF1AN; partial is present on asparagine 1945. Residues 2004-2012 form an HIF1AN-binding region; that stretch reads LINSHADVN. (3S)-3-hydroxyasparagine; by HIF1AN; partial is present on asparagine 2012. Disordered regions lie at residues 2140-2185, 2382-2428, and 2440-2531; these read KSAT…DSSS, QPQN…SLPV, and PTSL…EAFK. Residues 2382–2395 are compositionally biased toward low complexity; it reads QPQNLQPPSQPHLS. The span at 2440–2478 shows a compositional bias: polar residues; sequence PTSLPSSMVPPMTTTQFLTPPSQHSYSSSPVDNTPSHQL. Low complexity predominate over residues 2488 to 2503; sequence PSPESPDQWSSSSPHS. Positions 2504–2524 are enriched in polar residues; that stretch reads NISDWSEGISSPPTTMPSQIT.

This sequence belongs to the NOTCH family. As to quaternary structure, heterodimer of a C-terminal fragment N(TM) and an N-terminal fragment N(EC) which are probably linked by disulfide bonds. Interacts with DNER, DTX1, DTX2 and RBPJ/RBPSUH. Also interacts with MAML1, MAML2 and MAML3 which act as transcriptional coactivators for NOTCH1. Notch 1 intracellular domain interacts with SNW1; the interaction involves multimerized NOTCH1 NICD and is implicated in a formation of an intermediate preactivation complex which associates with DNA-bound CBF-1/RBPJ. The activated membrane-bound form interacts with AAK1 which promotes NOTCH1 stabilization. Forms a trimeric complex with FBXW7 and SGK1. Interacts with HIF1AN. HIF1AN negatively regulates the function of notch intracellular domain (NICD), accelerating myogenic differentiation. Interacts (via NICD) with SNAI1 (via zinc fingers); the interaction induces SNAI1 degradation via MDM2-mediated ubiquitination and inhibits SNAI1-induced cell invasion. Interacts (via NICD) with MDM2A. Interacts (via NICD) with BCL6; the interaction decreases MAML1 recruitment by NOTCH1 NICD on target genes DNA and inhibits NOTCH1 transactivation activity. Interacts with THBS4. Interacts (via the EGF-like repeat region) with CCN3 (via CTCK domain). Interacts (via EGF-like domains) with DLL4 (via N-terminal DSL and MNNL domains). Interacts with ZMIZ1. Interacts (via NICD domain) with MEGF10 (via the cytoplasmic domain). Interacts with DLL1 and JAG1. Interacts (via NICD domain) with PRAG1. Forms a complex with PRAG1, N1ICD and MAML1, in a MAML1-dependent manner. Interacts (via transmembrane region) with PSEN1; the interaction is direct. Interacts with ZFP64. Synthesized in the endoplasmic reticulum as an inactive form which is proteolytically cleaved by a furin-like convertase in the trans-Golgi network before it reaches the plasma membrane to yield an active, ligand-accessible form. Cleavage results in a C-terminal fragment N(TM) and a N-terminal fragment N(EC). Following ligand binding, it is cleaved by ADAM17 to yield a membrane-associated intermediate fragment called notch extracellular truncation (NEXT). Following endocytosis, this fragment is then cleaved by one of the catalytic subunits of gamma-secretase (PSEN1 or PSEN2) to release a Notch-derived peptide containing the intracellular domain (NICD) from the membrane. Post-translationally, phosphorylated. In terms of processing, O-linked glycosylation by GALNT11 is involved in determination of left/right symmetry: glycosylation promotes activation of NOTCH1, possibly by promoting cleavage by ADAM17, modulating the balance between motile and immotile (sensory) cilia at the left-right organiser (LRO). O-glycosylated on the EGF-like domains. O-glucosylated at Ser-435 by KDELC1 and KDELC2. Contains both O-linked fucose and O-linked glucose in the EGF-like domains 11, 12 and 13, which are interacting with the residues on DLL4. O-glycosylation at Ser-1027 is only partial. MFNG-, RFNG- and LFNG-mediated modification of O-fucose residues at specific EGF-like domains results in inhibition of its activation by JAG1 and enhancement of its activation by DLL1 via an increased binding to DLL1. Ubiquitinated. Undergoes 'Lys-29'-linked polyubiquitination by ITCH; promotes the lysosomal degradation of non-activated internalized NOTCH1. Deubiquitination by USP12 is required for transport of internalized non-activated receptor from late endosomes to lysosomes for degradation. Monoubiquitination at Lys-1749 is required for activation by gamma-secretase cleavage, it promotes interaction with AAK1, which stabilizes it. Deubiquitination by EIF3F is necessary for nuclear import of activated Notch. Post-translationally, hydroxylated at Asn-1945 and Asn-2012 by HIF1AN. Hydroxylation reduces affinity for HI1AN and may thus indirectly modulate negative regulation of NICD. Highly expressed in the brain, lung and thymus. Expressed at lower levels in the spleen, bone-marrow, spinal cord, eyes, mammary gland, liver, intestine, skeletal muscle, kidney and heart. In the hair follicle, highly expressed exclusively in the epithelial compartment.

The protein localises to the cell membrane. Its subcellular location is the late endosome membrane. It is found in the nucleus. Functionally, functions as a receptor for membrane-bound ligands Jagged-1 (JAG1), Jagged-2 (JAG2) and Delta-1 (DLL1) to regulate cell-fate determination. Upon ligand activation through the released notch intracellular domain (NICD) it forms a transcriptional activator complex with RBPJ/RBPSUH and activates genes of the enhancer of split locus. Affects the implementation of differentiation, proliferation and apoptotic programs. Involved in angiogenesis; negatively regulates endothelial cell proliferation and migration and angiogenic sprouting. Involved in the maturation of both CD4(+) and CD8(+) cells in the thymus. Important for follicular differentiation and possibly cell fate selection within the follicle. During cerebellar development, functions as a receptor for neuronal DNER and is involved in the differentiation of Bergmann glia. Represses neuronal and myogenic differentiation. May play an essential role in postimplantation development, probably in some aspect of cell specification and/or differentiation. May be involved in mesoderm development, somite formation and neurogenesis. May enhance HIF1A function by sequestering HIF1AN away from HIF1A. Required for the THBS4 function in regulating protective astrogenesis from the subventricular zone (SVZ) niche after injury. Involved in determination of left/right symmetry by modulating the balance between motile and immotile (sensory) cilia at the left-right organiser (LRO). The sequence is that of Neurogenic locus notch homolog protein 1 (Notch1) from Mus musculus (Mouse).